Reading from the N-terminus, the 153-residue chain is Ribosome maturation factor RimP (153 aa).

The protein belongs to the RimP family.

The protein localises to the cytoplasm. In terms of biological role, required for maturation of 30S ribosomal subunits. This Picosynechococcus sp. (strain ATCC 27264 / PCC 7002 / PR-6) (Agmenellum quadruplicatum) protein is Ribosome maturation factor RimP.